The chain runs to 251 residues: 14-3-3-like protein (251 aa).

The protein belongs to the 14-3-3 family.

In Fucus vesiculosus (Bladder wrack), this protein is 14-3-3-like protein.